Consider the following 207-residue polypeptide: MPRSSLAQLAPLPRAFFNRDPRIVGRELLGKVLLRREGRAILAGRIVECEAYLGADDAAAHSAAGKTARNAVLFGPPGYAYVYFIYGNHFCLNVSCLPDGQAGGILFRALEPIAGVERMAANRQLEPSQLRLIASGPGRLAEALAVTRDRDNGKDMVSPKSDLRIVDDGFGAVEVRETPRIGITKSADLPLRYIVAGSPFVSGKRYL.

It belongs to the DNA glycosylase MPG family.

The sequence is that of Putative 3-methyladenine DNA glycosylase from Koribacter versatilis (strain Ellin345).